A 189-amino-acid chain; its full sequence is Density-regulated protein homolog (189 aa).

One can recognise an SUI1 domain in the interval 105–172 (ICVSRAARGK…DLFDVIPEKW (68 aa)).

Belongs to the DENR family. Interacts with MCTS1.

Its function is as follows. Regulates translation as part of a complex with MCTS1. Specifically required for translational re-initiation in mRNAs containing upstream open reading frames (uORFs). Not required for standard translational initiation. Regulates expression of a subset of gene products including mbc, InR and EcR. This is Density-regulated protein homolog from Drosophila melanogaster (Fruit fly).